The following is a 194-amino-acid chain: Holliday junction branch migration complex subunit RuvA (194 aa).

Residues 1–64 (MIGRLRGVLT…DDSAALYGFL (64 aa)) form a domain I region. Positions 65–140 (SESERRLFRH…RAADFNNGIS (76 aa)) are domain II. The flexible linker stretch occupies residues 140–144 (STSGK). The segment at 145–194 (LNLDTVSEAALALQQLGYKPAEAARMARDAGTESDDVATVIKKALQAALC) is domain III.

The protein belongs to the RuvA family. As to quaternary structure, homotetramer. Forms an RuvA(8)-RuvB(12)-Holliday junction (HJ) complex. HJ DNA is sandwiched between 2 RuvA tetramers; dsDNA enters through RuvA and exits via RuvB. An RuvB hexamer assembles on each DNA strand where it exits the tetramer. Each RuvB hexamer is contacted by two RuvA subunits (via domain III) on 2 adjacent RuvB subunits; this complex drives branch migration. In the full resolvosome a probable DNA-RuvA(4)-RuvB(12)-RuvC(2) complex forms which resolves the HJ.

The protein localises to the cytoplasm. In terms of biological role, the RuvA-RuvB-RuvC complex processes Holliday junction (HJ) DNA during genetic recombination and DNA repair, while the RuvA-RuvB complex plays an important role in the rescue of blocked DNA replication forks via replication fork reversal (RFR). RuvA specifically binds to HJ cruciform DNA, conferring on it an open structure. The RuvB hexamer acts as an ATP-dependent pump, pulling dsDNA into and through the RuvAB complex. HJ branch migration allows RuvC to scan DNA until it finds its consensus sequence, where it cleaves and resolves the cruciform DNA. This chain is Holliday junction branch migration complex subunit RuvA, found in Xylella fastidiosa (strain M12).